Consider the following 311-residue polypeptide: MEMMVHGRRDEQYGGLGLGLGLGLSLGVAGGAADDEQPPPRRGAAPPPQQQLCGWNGGGLFSSSSSDHRGRSAMMACHDVIEMPFLRGIDVNRAPAAETTTTTARGPSCSEEDEEPGASSPNSTLSSLSGKRGAPSAATAAAAAASDDEDSGGGSRKKLRLSKDQAAVLEDTFKEHNTLNPKQKAALARQLNLKPRQVEVWFQNRRARTKLKQTEVDCELLKRCCETLTDENRRLHRELQELRALKLATAAAAPHHLYGARVPPPTTLTMCPSCERVASAATTTRNNSGAAPARPVPTRPWPPAAAQRSSA.

Disordered regions lie at residues 29–69 and 97–160; these read AGGA…SDHR and AETT…KKLR. A compositionally biased stretch (low complexity) spans 119 to 145; it reads SSPNSTLSSLSGKRGAPSAATAAAAAA. The segment at residues 154-213 is a DNA-binding region (homeobox); sequence GSRKKLRLSKDQAAVLEDTFKEHNTLNPKQKAALARQLNLKPRQVEVWFQNRRARTKLKQ. The segment at 212 to 256 is leucine-zipper; it reads KQTEVDCELLKRCCETLTDENRRLHRELQELRALKLATAAAAPHH. Residues 279–311 are disordered; that stretch reads SAATTTRNNSGAAPARPVPTRPWPPAAAQRSSA. Residues 280–289 show a composition bias toward polar residues; it reads AATTTRNNSG. Residues 294–303 are compositionally biased toward pro residues; that stretch reads RPVPTRPWPP.

The protein belongs to the HD-ZIP homeobox family. Class II subfamily. In terms of assembly, homodimer. May form a heterodimer with HOX2, HOX3 or HOX7. Expressed in root provascular and vascular cylinder, provascular and vascular strands of leaves, provascular and vascular strands of the whole panicle, in mature embryo provascular bundles of scutellum and embryonic axis and provascular and vascular strands of young immature spikelet organs. Expressed in differentiating and differentiated xylem and phloem elements, and in outer and inner bundle sheath cells of all vascular bundles. Expressed in auricles, ligules, culm, guard cells brac hairs and pollen.

It is found in the nucleus. Probable transcription repressor involved leaf development. Binds to the DNA sequence 5'-CAAT[GC]ATTG-3'. May act as a regulatory switch to specify provascular cell fate. This chain is Homeobox-leucine zipper protein HOX1 (HOX1), found in Oryza sativa subsp. indica (Rice).